The following is a 119-amino-acid chain: Non-specific lipid-transfer protein 3 (119 aa).

The first 24 residues, M1–A24, serve as a signal peptide directing secretion. Cystine bridges form between C28-C77, C38-C54, C55-C100, and C75-C114.

Belongs to the plant LTP family. In terms of tissue distribution, expressed in roots, stem, leaves and tendrils of the mature plant.

Functionally, plant non-specific lipid-transfer proteins transfer phospholipids as well as galactolipids across membranes. May play a role in wax or cutin deposition in the cell walls of expanding epidermal cells and certain secretory tissues. This Pisum sativum (Garden pea) protein is Non-specific lipid-transfer protein 3.